A 431-amino-acid chain; its full sequence is MRTVVWQSLSEAQQESILERPAITEGANITAAVAQVIAKVRSEGDAALFELTEKFDRVKPASLRVSREEMDAAAARLSETMKQALEQAYNNISKFHKAQKAQPIKVETMPGVVCEQVTRPINKVGLYIPGGSAPLPSTVLMLGVPAQIAGCRKVVLCSPPPIADEILYVAKLCNIDEVYNLGGGQAIAAMAYGTETVTKVDKIFGPGNAYVTEAKRQVSNDFRGAAIDMPAGPSEVLVIADETADANFIAADLLSQAEHGPDSQVVLVTPSPVLADQVTDAVQKQLKVLSRASIAEKALASSLIIIAESLTQAVSISNYYGPEHLIVQTRNPRELVPLLDNAGSIFLGDWSPESVGDYASGTNHVLPTYGYTRTYSSLGLADFSKRMTVQELTADGLQLLAPTVVTMAEAEGLDAHKRAVTIRVEKLQKAQ.

The NAD(+) site is built by tyrosine 127, glutamine 185, and asparagine 208. Substrate-binding residues include serine 234, glutamine 256, and histidine 259. Zn(2+) is bound by residues glutamine 256 and histidine 259. Residues glutamate 323 and histidine 324 each act as proton acceptor in the active site. Substrate-binding residues include histidine 324, aspartate 357, glutamate 411, and histidine 416. Aspartate 357 is a Zn(2+) binding site. A Zn(2+)-binding site is contributed by histidine 416.

Belongs to the histidinol dehydrogenase family. Requires Zn(2+) as cofactor.

It carries out the reaction L-histidinol + 2 NAD(+) + H2O = L-histidine + 2 NADH + 3 H(+). The protein operates within amino-acid biosynthesis; L-histidine biosynthesis; L-histidine from 5-phospho-alpha-D-ribose 1-diphosphate: step 9/9. In terms of biological role, catalyzes the sequential NAD-dependent oxidations of L-histidinol to L-histidinaldehyde and then to L-histidine. This is Histidinol dehydrogenase from Vibrio cholerae serotype O1 (strain ATCC 39315 / El Tor Inaba N16961).